The chain runs to 296 residues: Nucleotide-binding protein spyM18_0713 (296 aa).

An ATP-binding site is contributed by 13 to 20 (GMSGAGKT). 63–66 (DMRS) lines the GTP pocket.

It belongs to the RapZ-like family.

Displays ATPase and GTPase activities. This chain is Nucleotide-binding protein spyM18_0713, found in Streptococcus pyogenes serotype M18 (strain MGAS8232).